A 533-amino-acid polypeptide reads, in one-letter code: Probable lipid II flippase MurJ (533 aa).

14 helical membrane-spanning segments follow: residues Leu-11–Leu-31, Ala-39–Ile-61, Leu-96–Ile-116, Leu-135–Leu-155, Ile-166–Leu-186, Trp-196–Leu-216, Leu-253–Pro-273, Phe-284–Val-304, Leu-330–Ile-350, Ala-360–Gly-380, Val-400–Gly-420, Val-422–Met-442, Leu-452–Ala-472, and Ile-493–Leu-513.

The protein belongs to the MurJ/MviN family.

The protein resides in the cell inner membrane. Its pathway is cell wall biogenesis; peptidoglycan biosynthesis. Involved in peptidoglycan biosynthesis. Transports lipid-linked peptidoglycan precursors from the inner to the outer leaflet of the cytoplasmic membrane. This chain is Probable lipid II flippase MurJ, found in Synechocystis sp. (strain ATCC 27184 / PCC 6803 / Kazusa).